The primary structure comprises 461 residues: Chromosomal replication initiator protein DnaA (461 aa).

A domain I, interacts with DnaA modulators region spans residues 1 to 87; sequence MAVSLWQQCI…IGSRPSAKPV (87 aa). Residues 87–124 are domain II; the sequence is VVQATAAVRTSRPVTREVTKPSFNTPHAEPMANANHRS. The interval 99-125 is disordered; it reads PVTREVTKPSFNTPHAEPMANANHRSN. Positions 125–341 are domain III, AAA+ region; that stretch reads NINPTYQFDN…GALNRVIANA (217 aa). 4 residues coordinate ATP: G169, G171, K172, and T173. Positions 342-461 are domain IV, binds dsDNA; sequence NFTGRPITID…YANLIRTLSS (120 aa).

This sequence belongs to the DnaA family. In terms of assembly, oligomerizes as a right-handed, spiral filament on DNA at oriC.

Its subcellular location is the cytoplasm. In terms of biological role, plays an essential role in the initiation and regulation of chromosomal replication. ATP-DnaA binds to the origin of replication (oriC) to initiate formation of the DNA replication initiation complex once per cell cycle. Binds the DnaA box (a 9 base pair repeat at the origin) and separates the double-stranded (ds)DNA. Forms a right-handed helical filament on oriC DNA; dsDNA binds to the exterior of the filament while single-stranded (ss)DNA is stabiized in the filament's interior. The ATP-DnaA-oriC complex binds and stabilizes one strand of the AT-rich DNA unwinding element (DUE), permitting loading of DNA polymerase. After initiation quickly degrades to an ADP-DnaA complex that is not apt for DNA replication. Binds acidic phospholipids. This Shewanella pealeana (strain ATCC 700345 / ANG-SQ1) protein is Chromosomal replication initiator protein DnaA.